We begin with the raw amino-acid sequence, 888 residues long: Leucine--tRNA ligase (888 aa).

The 'HIGH' region motif lies at 42-52 (PYPSGKLHMGH). The 'KMSKS' region motif lies at 640-644 (TMSKS). Lys643 provides a ligand contact to ATP.

Belongs to the class-I aminoacyl-tRNA synthetase family.

The protein localises to the cytoplasm. It carries out the reaction tRNA(Leu) + L-leucine + ATP = L-leucyl-tRNA(Leu) + AMP + diphosphate. The sequence is that of Leucine--tRNA ligase from Polaromonas naphthalenivorans (strain CJ2).